The sequence spans 228 residues: MSPSLTWHDVIGQEKEQPYFKDTLAYVAAERRAGKTIYPPQKDIFNAFRLTELDQVKVVILGQDPYHGPNQAHGLSFSVLPGVPAPPSLGNIYKELVTDIPGFQRPNHGFLQSWAEQGVLLLNTVLTVEAGKAHSHANLGWETFTDKVIVALNEHREGVIFMLWGSHAQKKGRIINTERHYILKAPHPSPLSAHRGFLGCKHFSQANQLLQQQNQQPIDWQPKLPAVE.

Catalysis depends on aspartate 64, which acts as the Proton acceptor.

The protein belongs to the uracil-DNA glycosylase (UDG) superfamily. UNG family.

It is found in the cytoplasm. It carries out the reaction Hydrolyzes single-stranded DNA or mismatched double-stranded DNA and polynucleotides, releasing free uracil.. Functionally, excises uracil residues from the DNA which can arise as a result of misincorporation of dUMP residues by DNA polymerase or due to deamination of cytosine. This Yersinia pseudotuberculosis serotype O:1b (strain IP 31758) protein is Uracil-DNA glycosylase.